The sequence spans 397 residues: MALALVLNSGSSSIKFQLVNPENSAIDEPYVSGLVEQIGEPNGRIVLKIEGEKYTLETPIADHSEGLNLAFDLMDQHNCGPSQLEITAVGHRVVHGGILFSAPELITDEIVEMIRDLIPLAPLHNPANVDGIDVARKILPDVPHVAVFDTGFFHSLPPAAALYAINKDVAAEHGIRRYGFHGTSHEFVSKRVVEILEKPTEDINTITFHLGNGASMAAVQGGRAVDTSMGMTPLAGLVMGTRSGDIDPGIVFHLSRTAGMSIDEIDNLLNKKSGVKGLSGVNDFRELREMIDNNDQDAWSAYNIYIHQLRRYLGSYMVALGRVDTIVFTAGVGENAQFVREDALAGLEMYGIEIDPERNALPNDGPRLISTDASKVKVFVIPTNEELAIARYAVKFA.

Asn-8 is a Mg(2+) binding site. Lys-15 serves as a coordination point for ATP. Position 92 (Arg-92) interacts with substrate. Catalysis depends on Asp-149, which acts as the Proton donor/acceptor. ATP is bound by residues 209-213 (HLGNG), 283-285 (DFR), and 331-335 (GVGEN). Glu-385 provides a ligand contact to Mg(2+).

The protein belongs to the acetokinase family. Homodimer. The cofactor is Mg(2+). Mn(2+) is required as a cofactor.

It is found in the cytoplasm. The catalysed reaction is acetate + ATP = acetyl phosphate + ADP. It participates in metabolic intermediate biosynthesis; acetyl-CoA biosynthesis; acetyl-CoA from acetate: step 1/2. Catalyzes the formation of acetyl phosphate from acetate and ATP. Can also catalyze the reverse reaction. This is Acetate kinase from Corynebacterium glutamicum (strain ATCC 13032 / DSM 20300 / JCM 1318 / BCRC 11384 / CCUG 27702 / LMG 3730 / NBRC 12168 / NCIMB 10025 / NRRL B-2784 / 534).